The chain runs to 360 residues: Uptake hydrogenase small subunit (360 aa).

Positions 1–46 form a signal peptide, tat-type signal; that stretch reads MATAETFYDVIRRQGITRRSFTKFCSLTAASLGFGPGAATAMAEAL. 8 residues coordinate [4Fe-4S] cluster: Cys62, Cys65, Cys160, Cys194, His232, Cys235, Cys260, and Cys266. Positions 275, 294, and 297 each coordinate [3Fe-4S] cluster.

This sequence belongs to the [NiFe]/[NiFeSe] hydrogenase small subunit family. In terms of assembly, heterodimer of a large and a small subunit. [4Fe-4S] cluster is required as a cofactor. [3Fe-4S] cluster serves as cofactor. In terms of processing, predicted to be exported by the Tat system. The position of the signal peptide cleavage has not been experimentally proven.

The protein localises to the cell membrane. It carries out the reaction H2 + A = AH2. This enzyme recycles the H(2) produced by nitrogenase to increase the production of ATP and to protect nitrogenase against inhibition or damage by O(2) under carbon- or phosphate-limited conditions. This is Uptake hydrogenase small subunit (hupA) from Rhizobium leguminosarum bv. viciae.